A 500-amino-acid polypeptide reads, in one-letter code: Aspartyl/glutamyl-tRNA(Asn/Gln) amidotransferase subunit B (500 aa).

The protein belongs to the GatB/GatE family. GatB subfamily. As to quaternary structure, heterotrimer of A, B and C subunits.

The catalysed reaction is L-glutamyl-tRNA(Gln) + L-glutamine + ATP + H2O = L-glutaminyl-tRNA(Gln) + L-glutamate + ADP + phosphate + H(+). It carries out the reaction L-aspartyl-tRNA(Asn) + L-glutamine + ATP + H2O = L-asparaginyl-tRNA(Asn) + L-glutamate + ADP + phosphate + 2 H(+). Allows the formation of correctly charged Asn-tRNA(Asn) or Gln-tRNA(Gln) through the transamidation of misacylated Asp-tRNA(Asn) or Glu-tRNA(Gln) in organisms which lack either or both of asparaginyl-tRNA or glutaminyl-tRNA synthetases. The reaction takes place in the presence of glutamine and ATP through an activated phospho-Asp-tRNA(Asn) or phospho-Glu-tRNA(Gln). The sequence is that of Aspartyl/glutamyl-tRNA(Asn/Gln) amidotransferase subunit B from Allorhizobium ampelinum (strain ATCC BAA-846 / DSM 112012 / S4) (Agrobacterium vitis (strain S4)).